The chain runs to 196 residues: Nitrogen regulatory protein P-II homolog (196 aa).

The N-terminal 61 residues, 1–61 (MAASMTKPIS…NNSRVLPVVS (61 aa)), are a transit peptide targeting the chloroplast. ATP is bound by residues 108–112 (GFGAQ) and 161–164 (GDGK). Gly-110 contributes to the Mg(2+) binding site.

This sequence belongs to the P(II) protein family. In terms of assembly, homodimer. Interacts with NAGK. Interaction with NAGK is dependent of MgATP and inhibited by 2-oxoglutarate, arginine, glutamate, citrate, and oxaloacetate.

Its subcellular location is the plastid. It is found in the chloroplast. Functionally, participates in sensing carbon and organic nitrogen status and regulates some steps of primary carbon and nitrogen metabolism. Required for nitrite uptake in chloroplasts and regulates arginine biosynthesis through interaction with acetylglutamate kinase (NAGK) in chloroplasts. Regulates fatty acids synthesis in chloroplasts by interacting with the acetyl-CoA carboxylase complex and inhibiting acetyl-CoA carboxylase (ACCase) activity. The chain is Nitrogen regulatory protein P-II homolog (GLB1) from Arabidopsis thaliana (Mouse-ear cress).